The sequence spans 475 residues: FAD-dependent monooxygenase janM (475 aa).

Residues 8–24 traverse the membrane as a helical segment; the sequence is VIIVGGSIGGLTLAHCL. FAD is bound by residues glutamate 35, glycine 49, and arginine 108. A glycan (N-linked (GlcNAc...) asparagine) is linked at asparagine 147. 2 residues coordinate FAD: aspartate 299 and alanine 312. A helical membrane pass occupies residues 432 to 451; the sequence is GWRFHAMLCILMLAILYTWV.

Belongs to the paxM FAD-dependent monooxygenase family. The cofactor is FAD.

The protein resides in the membrane. The protein operates within secondary metabolite biosynthesis. Functionally, FAD-dependent monooxygenase; part of the gene cluster that mediates the biosynthesis of the indole diterpenes janthitremanes such as shearinine K or shearinine A. The geranylgeranyl diphosphate (GGPP) synthase janG catalyzes the first step in janthitremane biosynthesis via conversion of farnesyl pyrophosphate and isopentyl pyrophosphate into geranylgeranyl pyrophosphate (GGPP). Condensation of indole-3-glycerol phosphate with GGPP by the prenyl transferase janC then forms 3-geranylgeranylindole (3-GGI). Epoxidation by the FAD-dependent monooxygenase janM leads to a epoxidized-GGI that is substrate of the terpene cyclase janB for cyclization to yield paspaline. Paspaline is subsequently converted to 13-desoxypaspaline by the cytochrome P450 monooxygenase janP, via beta-PC-M6 in a series of alpha-face oxidations. The cytochrome P450 monooxygenase janQ is proposed to carry out sequential beta-face oxidation steps at C-7 and C-13 of 13-desoxypaspaline to form paspalicine and paspalinine respectively. The indole diterpene prenyltransferase janD may then convert paspalinine into shearinine K which is substrate of janO and/or additional enzymes for oxidation and cyclization to generate shearinine A. The polypeptide is FAD-dependent monooxygenase janM (Penicillium janthinellum (Penicillium vitale)).